Reading from the N-terminus, the 204-residue chain is Peptide deformylase (204 aa).

Fe cation contacts are provided by Cys-131 and His-174. Glu-175 is a catalytic residue. Fe cation is bound at residue His-178.

Belongs to the polypeptide deformylase family. Fe(2+) is required as a cofactor.

It carries out the reaction N-terminal N-formyl-L-methionyl-[peptide] + H2O = N-terminal L-methionyl-[peptide] + formate. Functionally, removes the formyl group from the N-terminal Met of newly synthesized proteins. Requires at least a dipeptide for an efficient rate of reaction. N-terminal L-methionine is a prerequisite for activity but the enzyme has broad specificity at other positions. This is Peptide deformylase from Streptococcus thermophilus (strain CNRZ 1066).